The chain runs to 472 residues: Acyltransferase PapA3 (472 aa).

It belongs to the PapA acyltransferase family.

The enzyme catalyses a long-chain fatty acyl-CoA + alpha,alpha-trehalose = a 2-O-(long-chain fatty acyl)-alpha,alpha-trehalose + CoA. It carries out the reaction a mycolipenoyl-CoA + a 2-O-(long-chain fatty acyl)-alpha,alpha-trehalose = a 2-O-(long-chain fatty acyl)-3-O-mycolipenoyl-trehalose + CoA. It catalyses the reaction alpha,alpha-trehalose + hexadecanoyl-CoA = 2-O-hexadecanoyl-alpha,alpha-trehalose + CoA. The catalysed reaction is 2-O-hexadecanoyl-alpha,alpha-trehalose + hexadecanoyl-CoA = 2-O,3-O-dihexadecanoyl-alpha,alpha-trehalose + CoA. Involved in the biosynthesis of polyacyltrehalose (PAT), a pentaacylated, trehalose-based glycolipid that could have a role in anchoring the bacterial capsule. Catalyzes the sequential transfer of two palmitoyl groups onto a single glucose residue of trehalose generating the diacylated product 2,3-diacyltrehalose (trehalose dipalmitate). The sequence is that of Acyltransferase PapA3 (papA3) from Mycobacterium tuberculosis (strain CDC 1551 / Oshkosh).